A 339-amino-acid polypeptide reads, in one-letter code: Ferrochelatase (339 aa).

Fe cation is bound by residues His-209 and Glu-290.

Belongs to the ferrochelatase family.

The protein resides in the cytoplasm. The enzyme catalyses heme b + 2 H(+) = protoporphyrin IX + Fe(2+). It participates in porphyrin-containing compound metabolism; protoheme biosynthesis; protoheme from protoporphyrin-IX: step 1/1. Catalyzes the ferrous insertion into protoporphyrin IX. This chain is Ferrochelatase, found in Rhizobium meliloti (strain 1021) (Ensifer meliloti).